Consider the following 541-residue polypeptide: GMP synthase [glutamine-hydrolyzing] (541 aa).

The 196-residue stretch at 17–212 (TILVLDFGSQ…AVDICQSTTD (196 aa)) folds into the Glutamine amidotransferase type-1 domain. The active-site Nucleophile is cysteine 93. Catalysis depends on residues histidine 186 and glutamate 188. The 204-residue stretch at 213 to 416 (WTMGKFVDQE…LGIPEDLVWR (204 aa)) folds into the GMPS ATP-PPase domain. 241–247 (SGGVDST) is a binding site for ATP. Arginine 315, aspartate 478, lysine 533, and glutamate 539 together coordinate XMP.

In terms of assembly, homodimer. Requires Mg(2+) as cofactor.

Its subcellular location is the cytoplasm. It is found in the cytosol. The enzyme catalyses XMP + L-glutamine + ATP + H2O = GMP + L-glutamate + AMP + diphosphate + 2 H(+). It participates in purine metabolism; GMP biosynthesis; GMP from XMP (L-Gln route): step 1/1. Functionally, catalyzes the conversion of xanthine monophosphate (XMP) to GMP in the presence of glutamine and ATP through an adenyl-XMP intermediate. The sequence is that of GMP synthase [glutamine-hydrolyzing] (GUA1) from Phaeosphaeria nodorum (strain SN15 / ATCC MYA-4574 / FGSC 10173) (Glume blotch fungus).